A 537-amino-acid polypeptide reads, in one-letter code: Quadr-hydrophobin (537 aa).

Positions methionine 1–alanine 17 are cleaved as a signal peptide. 4 hydrophobin regions span residues glycine 63–isoleucine 199, glycine 200–threonine 299, glycine 300–leucine 421, and glycine 422–isoleucine 537. Residues asparagine 70 and asparagine 113 are each glycosylated (N-linked (GlcNAc...) asparagine). Cystine bridges form between cysteine 134/cysteine 183, cysteine 144/cysteine 174, cysteine 145/cysteine 157, cysteine 184/cysteine 195, cysteine 234/cysteine 283, cysteine 244/cysteine 274, cysteine 245/cysteine 257, cysteine 284/cysteine 295, cysteine 356/cysteine 405, cysteine 366/cysteine 396, cysteine 367/cysteine 379, cysteine 406/cysteine 417, cysteine 471/cysteine 520, cysteine 481/cysteine 511, cysteine 482/cysteine 494, and cysteine 521/cysteine 532.

The protein belongs to the cerato-ulmin hydrophobin family. As to quaternary structure, homotetramer. Further self-assembles to form highly ordered films at water-air interfaces through intermolecular interactions.

It is found in the secreted. The protein resides in the cell wall. Functionally, aerial growth, conidiation, and dispersal of filamentous fungi in the environment rely upon a capability of their secreting small amphipathic proteins called hydrophobins (HPBs) with low sequence identity. Class I can self-assemble into an outermost layer of rodlet bundles on aerial cell surfaces, conferring cellular hydrophobicity that supports fungal growth, development and dispersal; whereas Class II form highly ordered films at water-air interfaces through intermolecular interactions but contribute nothing to the rodlet structure. The sequence is that of Quadr-hydrophobin from Cordyceps militaris (Caterpillar fungus).